The chain runs to 275 residues: Dermonecrotic toxin LamSicTox-alphaIV1ii (275 aa).

Residue His-5 is part of the active site. The Mg(2+) site is built by Glu-25 and Asp-27. His-41 acts as the Nucleophile in catalysis. Cystine bridges form between Cys-45/Cys-51 and Cys-47/Cys-192. Asp-85 provides a ligand contact to Mg(2+).

This sequence belongs to the arthropod phospholipase D family. Class II subfamily. Mg(2+) is required as a cofactor. In terms of tissue distribution, expressed by the venom gland.

It localises to the secreted. It carries out the reaction an N-(acyl)-sphingosylphosphocholine = an N-(acyl)-sphingosyl-1,3-cyclic phosphate + choline. The catalysed reaction is an N-(acyl)-sphingosylphosphoethanolamine = an N-(acyl)-sphingosyl-1,3-cyclic phosphate + ethanolamine. It catalyses the reaction a 1-acyl-sn-glycero-3-phosphocholine = a 1-acyl-sn-glycero-2,3-cyclic phosphate + choline. The enzyme catalyses a 1-acyl-sn-glycero-3-phosphoethanolamine = a 1-acyl-sn-glycero-2,3-cyclic phosphate + ethanolamine. Dermonecrotic toxins cleave the phosphodiester linkage between the phosphate and headgroup of certain phospholipids (sphingolipid and lysolipid substrates), forming an alcohol (often choline) and a cyclic phosphate. This toxin acts on sphingomyelin (SM). It may also act on ceramide phosphoethanolamine (CPE), lysophosphatidylcholine (LPC) and lysophosphatidylethanolamine (LPE), but not on lysophosphatidylserine (LPS), and lysophosphatidylglycerol (LPG). It acts by transphosphatidylation, releasing exclusively cyclic phosphate products as second products. Induces dermonecrosis, hemolysis, increased vascular permeability, edema, inflammatory response, and platelet aggregation. The protein is Dermonecrotic toxin LamSicTox-alphaIV1ii of Loxosceles amazonica (Recluse spider).